Consider the following 270-residue polypeptide: DNA packaging protein OPG160 (270 aa).

ATP is bound at residue 55–62; it reads VYNPDYDG.

Belongs to the orthopoxvirus OPG160 protein family. In terms of assembly, interacts with protein OPG137.

Functionally, participates in viral DNA packaging and virion morphogenesis. This Homo sapiens (Human) protein is DNA packaging protein OPG160 (OPG160).